We begin with the raw amino-acid sequence, 32 residues long: Snake venom serine proteinase (32 aa).

A Peptidase S1 domain is found at 1-32 (VIGGDECDINEHRFLVFLTXASGLACGGTLIN).

It belongs to the peptidase S1 family. Snake venom subfamily. In terms of assembly, monomer. In terms of processing, contains 6 disulfide bonds. Glycosylated. In terms of tissue distribution, expressed by the venom gland.

It localises to the secreted. Functionally, cleaves a kininogen analog with the release of kallidin (lysyl-bradykinin). Completely cleaves fibrinogen Aalpha chain, partially cleaves Bbeta chain and has no activity on gamma chain. This is Snake venom serine proteinase from Bitis arietans (African puff adder).